A 525-amino-acid polypeptide reads, in one-letter code: Retinoblastoma-binding-like protein E (525 aa).

WD repeat units follow at residues 25–66 (PKNI…IVRT), 69–108 (HHTGCVNSISWSRNGKKLLTASNDGSLVLWDLATSKILYS), 222–261 (SSNTTVKQIEFSRNHRFMLVSSSDKVLRLISLESTNLYQQ), 267–312 (DSVN…KDLE), and 313–352 (GPKEGLVDVVWHPLRPIIVSISFTGVIYVWTAYFEENWSS). Disordered stretches follow at residues 371 to 398 (DEFDAKDSDNENQEVNNNNNNNIGRNPY) and 462 to 525 (EKYQ…KKRK). Over residues 383-392 (QEVNNNNNNN) the composition is skewed to low complexity. Positions 462 to 471 (EKYQKDKEDS) are enriched in basic and acidic residues. Residues 472–500 (SSTTSNSTISSSSSPSPSSSSTTTTTTTS) show a composition bias toward low complexity. The span at 501 to 525 (QKKDETQKKEKSTKKERNSDSKKRK) shows a compositional bias: basic and acidic residues.

The protein localises to the nucleus. Functionally, involved in mono-, di- and trimethylation at 'Lys-4' of histone H3. Histone H3 'Lys-4' methylation represents a specific tag for epigenetic transcriptional activation. This is Retinoblastoma-binding-like protein E from Dictyostelium discoideum (Social amoeba).